Reading from the N-terminus, the 367-residue chain is mRNA-decapping enzyme-like protein (367 aa).

3 disordered regions span residues 144–179, 196–246, and 299–333; these read PKAS…RDAP, NTAS…SSSP, and PNNA…PTGP. The span at 196 to 211 shows a compositional bias: polar residues; it reads NTASGSASGPYQSSAI. Residues 212-234 show a composition bias toward low complexity; it reads PHQPHQPHQPTIAPPVAAAAPPQ. Positions 299 to 309 are enriched in polar residues; it reads PNNASHQQRSY. A compositionally biased stretch (pro residues) spans 315–331; that stretch reads QPFPPPTPPPSLAPAPT.

The protein belongs to the DCP1 family. Homodimer. Component of the decapping complex. Interacts with DCP2 and DCP5. Interacts with BCHA1. In terms of tissue distribution, expressed in seedlings, mostly in root tips, root hairs, and the vascular system. Also present in roots, leaves, stems, and flowers.

The protein localises to the cytoplasm. It localises to the P-body. In terms of biological role, as a component of the decapping complex, involved in the degradation of mRNAs. Essential for postembryonic development. The protein is mRNA-decapping enzyme-like protein of Arabidopsis thaliana (Mouse-ear cress).